We begin with the raw amino-acid sequence, 130 residues long: MKYTNIVIGIIIKKNKIYITKARKKKYVLDLWEFPGGKVKENENLTYSLKRELSEEVGLKILRFRFFRCIKYFYKKIKLYFFLITRWKGRIYSKEGYLYKWIFLDDLKYFNFPSPNSHIIHDLQKMIFFK.

The 128-residue stretch at 1–128 (MKYTNIVIGI…IIHDLQKMIF (128 aa)) folds into the Nudix hydrolase domain. Mg(2+)-binding residues include Gly-36 and Glu-56. The short motif at 37 to 58 (GKVKENENLTYSLKRELSEEVG) is the Nudix box element.

The protein belongs to the Nudix hydrolase family. Requires Mg(2+) as cofactor.

The enzyme catalyses 8-oxo-dGTP + H2O = 8-oxo-dGMP + diphosphate + H(+). The catalysed reaction is 8-oxo-GTP + H2O = 8-oxo-GMP + diphosphate + H(+). Functionally, specifically hydrolyzes both 8-oxo-deoxyguanosine triphosphate (8-oxo-dGTP) and 8-oxo-guanosine triphosphate (8-oxo-GTP) to the related monophosphates, thereby cleaning up the nucleotide pools and preventing misincorporation of 8-oxoGua into DNA and RNA. It prevents replicational errors by removing an oxidatively damaged form of guanine (8-oxo-dGTP) from DNA and the nucleotide pool. 8-oxo-dGTP can be inserted opposite dA and dC residues of template DNA with almost equal efficiency thus leading to A.T to G.C transversions. This chain is 8-oxo-dGTP diphosphatase (mutT), found in Buchnera aphidicola subsp. Schizaphis graminum (strain Sg).